A 184-amino-acid polypeptide reads, in one-letter code: uncharacterized protein (184 aa).

The first 20 residues, 1–20 (MKKQILALVCGVIFSSSTWA), serve as a signal peptide directing secretion.

To E.coli YtfJ.

It is found in the periplasm. This is an uncharacterized protein from Haemophilus influenzae (strain ATCC 51907 / DSM 11121 / KW20 / Rd).